We begin with the raw amino-acid sequence, 257 residues long: Homeobox protein ceh-36 (257 aa).

Positions 33 to 49 (SATTSSTTMAPMAPNSE) are enriched in low complexity. Disordered stretches follow at residues 33–63 (SATT…TSFN) and 113–156 (DRNN…GTPE). A DNA-binding region (homeobox) is located at residues 55 to 117 (GRRERTSFNR…NRRAKDRNNK (63 aa)). The span at 123–137 (HPGSTSSRSSNGSPH) shows a compositional bias: low complexity.

The protein belongs to the paired homeobox family. Interacts with sox-2. In terms of tissue distribution, expressed in ASE and AWC chemosensory neurons. Expressed left-right asymmetrically in the embryo, in the grandmother cell and the mother cell to the MI pharyngeal motorneuron but in neither analogous precursors of the e3D neuron.

The protein localises to the nucleus. Probable transcription factor, acting as a progenitor identity factor regulating the development of lineally-related embryonic cells including glial, excretory and neuronal cells. Mediates chemosensory function of ASE and AWC neurons. In ASE neurons, required to diversify the fate of the ASEL neurons from the ASER neurons. Acts cell-autonomously to establish a neuronal left right asymmetry, possibly promoting asymmetric expression of the helix-loop-helix proteins ngn-1 and hlh-2. In cooperation with the transcription factor sox-2, required for the differentiation of AWC olfactory neurons. May regulate the expression of sox-2 in AWC olfactory neurons. This Caenorhabditis elegans protein is Homeobox protein ceh-36.